We begin with the raw amino-acid sequence, 132 residues long: Small ribosomal subunit protein uS9 (132 aa).

The segment at 104 to 132 (GYLTRDPRMKERKKYGLRKARRAPQFSKR) is disordered. The span at 113–132 (KERKKYGLRKARRAPQFSKR) shows a compositional bias: basic residues.

It belongs to the universal ribosomal protein uS9 family.

The chain is Small ribosomal subunit protein uS9 from Natranaerobius thermophilus (strain ATCC BAA-1301 / DSM 18059 / JW/NM-WN-LF).